Reading from the N-terminus, the 227-residue chain is Uridylate kinase (227 aa).

Residue lysine 7–lysine 11 participates in ATP binding. Glycine 44 contributes to the UMP binding site. Glycine 45 and arginine 49 together coordinate ATP. Residues aspartate 66 and phenylalanine 114–threonine 120 contribute to the UMP site. Residues threonine 140, asparagine 141, tyrosine 146, and aspartate 149 each coordinate ATP.

Belongs to the UMP kinase family. In terms of assembly, homohexamer.

The protein resides in the cytoplasm. The enzyme catalyses UMP + ATP = UDP + ADP. It participates in pyrimidine metabolism; CTP biosynthesis via de novo pathway; UDP from UMP (UMPK route): step 1/1. With respect to regulation, unlike most bacteria, is not activated by GTP. UTP acts as a competitive inhibitor against both substrates. High concentration of UMP abolishes the inhibition of UTP at low ATP concentrations, indicating that UTP binds to the acceptor site (UMP site). Catalyzes the reversible phosphorylation of UMP to UDP, with ATP as the most efficient phosphate donor. Is also able to phosphorylate dUMP, although much less efficiently. This Saccharolobus solfataricus (strain ATCC 35092 / DSM 1617 / JCM 11322 / P2) (Sulfolobus solfataricus) protein is Uridylate kinase (pyrH).